Reading from the N-terminus, the 111-residue chain is Small ribosomal subunit protein bS16 (111 aa).

Belongs to the bacterial ribosomal protein bS16 family.

The protein is Small ribosomal subunit protein bS16 of Rickettsia felis (strain ATCC VR-1525 / URRWXCal2) (Rickettsia azadi).